The following is a 99-amino-acid chain: MIKLSAVILSIGLLVGCSTKPLEVKKETVHPNWPVQIKSYDEAKLSWQVKVIDGKAWVGMPFEDSQEFRIWLNDVKRYVHDQKTMXCYYRQELKEDKCK.

Positions 1-16 (MIKLSAVILSIGLLVG) are cleaved as a signal peptide. Cysteine 17 is lipidated: N-palmitoyl cysteine; by host. Residue cysteine 17 is the site of S-diacylglycerol cysteine; by host attachment. Over 18–99 (STKPLEVKKE…RQELKEDKCK (82 aa)) the chain is Periplasmic.

Interacts (via C-terminus) with the spanin inner membrane subunit (via C-terminus). Part of the spanin complex which spans the entire periplasmic space. The spanin complex is composed of spanin inner membrane subunit and spanin outer membrane subunit.

The protein resides in the host cell outer membrane. Its function is as follows. Component of the spanin complex that disrupts the host outer membrane and participates in cell lysis during virus exit. The spanin complex conducts the final step in host lysis by disrupting the outer membrane after holin and endolysin action have permeabilized the inner membrane and degraded the host peptidoglycans. Host outer membrane disruption is possibly due to local fusion between the inner and outer membrane performed by the spanin complex. The chain is Spanin, outer lipoprotein subunit (y13J) from Escherichia coli (Bacteriophage T4).